The primary structure comprises 328 residues: Organic solute transporter alpha-like protein (328 aa).

Over 1–44 (MNASENYFTMDPTENISQVLDQNRNNTNSLRTHPTVEEYYENMT) the chain is Extracellular. N-linked (GlcNAc...) asparagine glycans are attached at residues Asn2, Asn15, Asn25, and Asn42. Residues 45–65 (AFLSLAIFIASLLTILNISIF) traverse the membrane as a helical segment. Residues 66 to 84 (ATTVSRLRRHLDKPLLGPS) lie on the Cytoplasmic side of the membrane. Residues 85–105 (IMMVGLYPIISVAALVTILVP) form a helical membrane-spanning segment. Residue Tyr106 is a topological domain, extracellular. A helical transmembrane segment spans residues 107–127 (SWFICHTVMHVMFMVGGPVFR). Over 128–177 (TLLFRYVGSEQNYVKETAGEAVQLNTPPCCCCCLCLPMVIPTKAKLCISR) the chain is Cytoplasmic. Residues 178–198 (YMVWQMPFWQGSIMLVMNILY) form a helical membrane-spanning segment. Over 199–208 (YRDIQLYRQV) the chain is Extracellular. The helical transmembrane segment at 209–229 (MFFFIPFIVCSIVLGAWSLQI) threads the bilayer. Topologically, residues 230 to 247 (TVRMITKVRGDYQLRKKM) are cytoplasmic. Residues 248-265 (FCLQLVVMLCKLQYLVLY) traverse the membrane as a helical segment. Residues 266-287 (DQLDGIKMGGEYPINHTVYKQT) are Extracellular-facing. N-linked (GlcNAc...) asparagine glycosylation is present at Asn280. The chain crosses the membrane as a helical span at residues 288 to 308 (IINILILVEMVLVSMMVQSAY). Residues 309–328 (RTPVQVQIDEVNKEKEVTRI) are Cytoplasmic-facing.

It belongs to the OST-alpha family.

It localises to the cell membrane. Probable transporter. In Drosophila melanogaster (Fruit fly), this protein is Organic solute transporter alpha-like protein.